Consider the following 626-residue polypeptide: MTNNDTPGMREYEYKAEMKQLLELIVHSLYTHPEIFLRELISNASDALSKVRFNALTDESIINSDAGLAIRITLDPEAHTIVIEDNGTGMTEEELILNLGTVARSGTLGFLQALKEQQKELDGNLIGQFGVGFYSVFMVTDEVTVETRSSGADSAGYRWRSGAAGTFTIERIEKEQRGTKISFALKDEFKEFSEAYRIEQIIRKYSNFVDFPIFLGDNQINTISALWQRSKNEVSDEERNEFYKFLSNDFNPPLDSLHLSVEGKVCFKALLFLPEEAPPELMYRQGDLESRGPQLYVKKVLIQQECRDLLPEYLRFVAGVVDTEDLPLNVSREVVQSSKVMANIRQILTGKILSWFESMATDQPEKFRKFYKAFGPFLKIGLNTDFTHRDRIIGLMRFESTKTAEGEYVTFKEYVERMEAGQNEIYYHSGSNRIQLLAHPNLEYFQHKGIEVLLLSDPVDVFVIPSIHEYDKKPLKSIEKADIDFTRTGDDKTEPPLPETLSQPLLGLFRQTIGDVIEDVVESHRLVSSPVTLVSGKDSLDSSMEKMMKMMHAEMPAAKKILEVNTSHPIIKNLSGMIMANEHNPLIRTVIQQLYDGALLHEGNLDATTGFLQRMNELIEAATMSR.

Residues 1 to 332 (MTNNDTPGMR…TEDLPLNVSR (332 aa)) are a; substrate-binding. Positions 333-546 (EVVQSSKVMA…KDSLDSSMEK (214 aa)) are b. The c stretch occupies residues 547 to 626 (MMKMMHAEMP…ELIEAATMSR (80 aa)).

This sequence belongs to the heat shock protein 90 family. In terms of assembly, homodimer.

It localises to the cytoplasm. Functionally, molecular chaperone. Has ATPase activity. The polypeptide is Chaperone protein HtpG (Chlorobium phaeobacteroides (strain DSM 266 / SMG 266 / 2430)).